The primary structure comprises 444 residues: Glutamyl-tRNA reductase (444 aa).

Substrate contacts are provided by residues 49-52, Ser109, 114-116, and Gln120; these read TCNR and ETQ. Cys50 acts as the Nucleophile in catalysis. 189–194 provides a ligand contact to NADP(+); the sequence is GAGKMG.

Belongs to the glutamyl-tRNA reductase family. As to quaternary structure, homodimer.

The catalysed reaction is (S)-4-amino-5-oxopentanoate + tRNA(Glu) + NADP(+) = L-glutamyl-tRNA(Glu) + NADPH + H(+). It participates in porphyrin-containing compound metabolism; protoporphyrin-IX biosynthesis; 5-aminolevulinate from L-glutamyl-tRNA(Glu): step 1/2. Its function is as follows. Catalyzes the NADPH-dependent reduction of glutamyl-tRNA(Glu) to glutamate 1-semialdehyde (GSA). This chain is Glutamyl-tRNA reductase, found in Bacillus cereus (strain ATCC 14579 / DSM 31 / CCUG 7414 / JCM 2152 / NBRC 15305 / NCIMB 9373 / NCTC 2599 / NRRL B-3711).